Reading from the N-terminus, the 381-residue chain is Dual-specificity RNA methyltransferase RlmN (381 aa).

Residue Glu-95 is the Proton acceptor of the active site. A Radical SAM core domain is found at 101–339 (DGRRGTLCVS…MTTVRTTRGD (239 aa)). The cysteines at positions 108 and 345 are disulfide-linked. Positions 115, 119, and 122 each coordinate [4Fe-4S] cluster. S-adenosyl-L-methionine is bound by residues 169 to 170 (GE), Ser-201, 223 to 225 (SLH), and Asn-302. The active-site S-methylcysteine intermediate is the Cys-345.

It belongs to the radical SAM superfamily. RlmN family. It depends on [4Fe-4S] cluster as a cofactor.

It is found in the cytoplasm. The catalysed reaction is adenosine(2503) in 23S rRNA + 2 reduced [2Fe-2S]-[ferredoxin] + 2 S-adenosyl-L-methionine = 2-methyladenosine(2503) in 23S rRNA + 5'-deoxyadenosine + L-methionine + 2 oxidized [2Fe-2S]-[ferredoxin] + S-adenosyl-L-homocysteine. It carries out the reaction adenosine(37) in tRNA + 2 reduced [2Fe-2S]-[ferredoxin] + 2 S-adenosyl-L-methionine = 2-methyladenosine(37) in tRNA + 5'-deoxyadenosine + L-methionine + 2 oxidized [2Fe-2S]-[ferredoxin] + S-adenosyl-L-homocysteine. In terms of biological role, specifically methylates position 2 of adenine 2503 in 23S rRNA and position 2 of adenine 37 in tRNAs. m2A2503 modification seems to play a crucial role in the proofreading step occurring at the peptidyl transferase center and thus would serve to optimize ribosomal fidelity. The polypeptide is Dual-specificity RNA methyltransferase RlmN (Alcanivorax borkumensis (strain ATCC 700651 / DSM 11573 / NCIMB 13689 / SK2)).